Consider the following 352-residue polypeptide: Biotin synthase (352 aa).

The 219-residue stretch at 44-262 folds into the Radical SAM core domain; it reads NRVQVSTLLS…LAVARILMPQ (219 aa). [4Fe-4S] cluster-binding residues include cysteine 59, cysteine 63, and cysteine 66. [2Fe-2S] cluster is bound by residues cysteine 103, cysteine 134, cysteine 194, and arginine 266.

The protein belongs to the radical SAM superfamily. Biotin synthase family. As to quaternary structure, homodimer. It depends on [4Fe-4S] cluster as a cofactor. [2Fe-2S] cluster is required as a cofactor.

The enzyme catalyses (4R,5S)-dethiobiotin + (sulfur carrier)-SH + 2 reduced [2Fe-2S]-[ferredoxin] + 2 S-adenosyl-L-methionine = (sulfur carrier)-H + biotin + 2 5'-deoxyadenosine + 2 L-methionine + 2 oxidized [2Fe-2S]-[ferredoxin]. It functions in the pathway cofactor biosynthesis; biotin biosynthesis; biotin from 7,8-diaminononanoate: step 2/2. In terms of biological role, catalyzes the conversion of dethiobiotin (DTB) to biotin by the insertion of a sulfur atom into dethiobiotin via a radical-based mechanism. The chain is Biotin synthase from Pseudomonas syringae pv. tomato (strain ATCC BAA-871 / DC3000).